The sequence spans 710 residues: F-box/WD repeat-containing protein 7 (710 aa).

The interval 1–158 (MNQELLSVGS…CSSVSDLPAH (158 aa)) is disordered. Position 26 is a phosphoserine (serine 26). The span at 46–55 (RHQEEEHTAR) shows a compositional bias: basic and acidic residues. Residues 69–84 (QNDTQQGQVEENNNRF) are compositionally biased toward polar residues. The span at 87-132 (VDEDSSGNQEEQEEDEEHAGEQEEEEEEEEEEEEMDQESDDFDPSD) shows a compositional bias: acidic residues. A compositionally biased stretch (basic and acidic residues) spans 133–142 (DSSREDEHTH). The segment covering 143 to 158 (NSNVTNCSSVSDLPAH) has biased composition (polar residues). Threonine 208 bears the Phosphothreonine mark. At serine 230 the chain carries Phosphoserine; by SGK1. The F-box domain occupies 281 to 327 (RDFISLLPKELALYVLSFLEPKDLLQAAQTCRYWRILAEDNLLWREK). 7 WD repeats span residues 381–421 (GHDD…RTLV), 423–459 (HTGG…CIHT), 462–501 (GHTS…HVLM), 503–539 (HVAA…CLHT), 542–581 (GHTN…HTLT), 583–621 (HQSL…QTLQ), and 625–662 (KHQS…FIRN).

In terms of assembly, homodimer; homodimerization plays a role in substrate binding and/or ubiquitination and degradation. Component of the SCF(FBXW7) complex consisting of CUL1, RBX1, SKP1 and FBXW7. Interacts (via F-box domain) with SKP1. Interacts (via F-box domain) with pseudophosphatase STYX; the interaction is direct and prevents FBXW7 interaction with SKP1. Interacts with cyclin-E (CCNE1 or CCNE2). Interacts with PSEN1. Forms a trimeric complex with NOTCH1 and SGK1. Interacts with NOTCH1 intracellular domain/NICD and NOTCH4 intracellular domain/NICD. Interacts with NOTCH2 intracellular domain (N2ICD). Interacts with MYC (when phosphorylated). Interacts with USP28, counteracting ubiquitination of MYC. Interacts (when phosphorylated at Thr-208) with PIN1, disrupting FBXW7 dimerization and promoting FBXW7 autoubiquitination and degradation. Interacts with UBE2QL1. Interacts with FAM83D; promotes FBXW7 degradation. Interacts with MYCN; FBXW7 competes with AURKA for binding to unphosphorylated MYCN but not for binding to phosphorylated MYCN. Interacts with JUN. Found in a complex with JUN and PRR7. Interacts with JUN and PRR7; the interaction inhibits ubiquitination-mediated JUN degradation, promoting its phosphorylation and transcriptional activity. Interacts with NFE2L1. Interacts with NR1D1. Interacts with RICTOR; mediates RICTOR ubiquitination and degradation. Interacts with USP38, counteracting ubiquitination of MYC. In terms of processing, phosphorylation at Thr-208 promotes interaction with PIN1, leading to disrupt FBXW7 dimerization and promoting FBXW7 autoubiquitination and degradation. Phosphorylated by ATM at Ser-26 in response to DNA damage, promoting recruitment to DNA damage sites and 'Lys-63'-linked ubiquitination of phosphorylated XRCC4. Post-translationally, ubiquitinated: autoubiquitinates following phosphorylation at Thr-208 and subsequent interaction with PIN1. Ubiquitination leads to its proteasomal degradation. In terms of tissue distribution, widely expressed with highest levels in brain, heart and testis.

It is found in the nucleus. The protein localises to the nucleoplasm. Its subcellular location is the chromosome. It participates in protein modification; protein ubiquitination. Its function is as follows. Substrate recognition component of a SCF (SKP1-CUL1-F-box protein) E3 ubiquitin-protein ligase complex which mediates the ubiquitination and subsequent proteasomal degradation of target proteins. Recognizes and binds phosphorylated sites/phosphodegrons within target proteins and thereafter brings them to the SCF complex for ubiquitination. Mediates ubiquitination and subsequent degradation of CCNE1 and MYC. Identified substrates include cyclin-E (CCNE1 or CCNE2), DISC1, JUN, MYC, NOTCH1 released notch intracellular domain (NICD), NOTCH2, MCL1, MLST8, RICTOR and probably PSEN1. Acts as a negative regulator of JNK signaling by binding to phosphorylated JUN and promoting its ubiquitination and subsequent degradation. SCF(FBXW7) complex mediates the ubiquitination and subsequent degradation of NFE2L1. Involved in bone homeostasis and negative regulation of osteoclast differentiation. Regulates the amplitude of the cyclic expression of hepatic core clock genes and genes involved in lipid and glucose metabolism via ubiquitination and proteasomal degradation of their transcriptional repressor NR1D1; CDK1-dependent phosphorylation of NR1D1 is necessary for SCF(FBXW7)-mediated ubiquitination. Also able to promote 'Lys-63'-linked ubiquitination in response to DNA damage. The SCF(FBXW7) complex facilitates double-strand break repair following phosphorylation by ATM: phosphorylation promotes localization to sites of double-strand breaks and 'Lys-63'-linked ubiquitination of phosphorylated XRCC4, enhancing DNA non-homologous end joining. This chain is F-box/WD repeat-containing protein 7, found in Mus musculus (Mouse).